A 653-amino-acid polypeptide reads, in one-letter code: Acetyl-coenzyme A synthetase 1 (653 aa).

Residues 191–194 (RGGR), Thr311, and Asn335 contribute to the CoA site. ATP is bound by residues 387–389 (GEP), 411–416 (DTWWQT), Asp500, and Arg515. Ser523 lines the CoA pocket. Arg526 is an ATP binding site. Mg(2+) contacts are provided by Val537, His539, and Val542. A CoA-binding site is contributed by Arg584. At Lys609 the chain carries N6-acetyllysine.

It belongs to the ATP-dependent AMP-binding enzyme family. It depends on Mg(2+) as a cofactor. Post-translationally, acetylated. Deacetylation by the SIR2-homolog deacetylase activates the enzyme.

It catalyses the reaction acetate + ATP + CoA = acetyl-CoA + AMP + diphosphate. In terms of biological role, catalyzes the conversion of acetate into acetyl-CoA (AcCoA), an essential intermediate at the junction of anabolic and catabolic pathways. AcsA undergoes a two-step reaction. In the first half reaction, AcsA combines acetate with ATP to form acetyl-adenylate (AcAMP) intermediate. In the second half reaction, it can then transfer the acetyl group from AcAMP to the sulfhydryl group of CoA, forming the product AcCoA. This chain is Acetyl-coenzyme A synthetase 1, found in Pseudomonas putida (strain ATCC 47054 / DSM 6125 / CFBP 8728 / NCIMB 11950 / KT2440).